Reading from the N-terminus, the 892-residue chain is Alpha-actinin-1 (892 aa).

The residue at position 1 (methionine 1) is an N-acetylmethionine. Positions 1–247 are actin-binding; that stretch reads MDHYDSQQTN…IMTYVSSFYH (247 aa). Residue serine 6 is modified to Phosphoserine. Tyrosine 12 is subject to Phosphotyrosine; by FAK1. Calponin-homology (CH) domains follow at residues 31-135 and 144-250; these read KQQR…LRFA and TSAK…HAFS. An N6-acetyllysine mark is found at lysine 95 and lysine 195. Spectrin repeat units lie at residues 274–384, 394–499, 509–620, and 630–733; these read QLME…WLLN, HLAE…ALER, QLYL…ALTE, and RLRK…EVEN. Residues 274–733 are interaction with DDN; the sequence is QLMEDYEKLA…IARTINEVEN (460 aa). Residue serine 471 is modified to Phosphoserine. At lysine 676 the chain carries N6-acetyllysine. Phosphoserine is present on serine 677. 2 EF-hand domains span residues 746–781 and 787–822; these read EQMN…LGYD and QGEA…ETAD. The Ca(2+) site is built by aspartate 759, aspartate 761, serine 763, threonine 765, and glutamate 770. A Phosphoserine modification is found at serine 890.

The protein belongs to the alpha-actinin family. In terms of assembly, homodimer; antiparallel. Interacts with MYOZ2, TTID and LPP. Interacts with DDN. Interacts with PSD. Interacts with MICALL2. Interacts with DNM2 and CTTN. Interacts with PDLIM1. Interacts with PDLIM2. Interacts with PDLIM4 (via PDZ domain). Interacts with IGSF8.

It is found in the cytoplasm. It localises to the cytoskeleton. The protein localises to the myofibril. Its subcellular location is the sarcomere. The protein resides in the z line. It is found in the cell membrane. It localises to the cell junction. The protein localises to the cell projection. Its subcellular location is the ruffle. In terms of biological role, F-actin cross-linking protein which is thought to anchor actin to a variety of intracellular structures. Association with IGSF8 regulates the immune synapse formation and is required for efficient T-cell activation. The protein is Alpha-actinin-1 (Actn1) of Mus musculus (Mouse).